The sequence spans 136 residues: Early E3 15.3 kDa protein (136 aa).

The protein belongs to the adenoviridae E3_15 family.

Functionally, protects virus-infected cells from TNF-induced cytolysis. In Human adenovirus B serotype 3 (HAdV-3), this protein is Early E3 15.3 kDa protein.